We begin with the raw amino-acid sequence, 912 residues long: Metabotropic glutamate receptor 4 (912 aa).

An N-terminal signal peptide occupies residues Met1–Gly32. At Lys33 to Pro586 the chain is on the extracellular side. Cysteines 67 and 109 form a disulfide. A glycan (N-linked (GlcNAc...) asparagine) is linked at Asn98. L-glutamate is bound by residues Ser159, Ala180 to Thr182, and Tyr230. 7 cysteine pairs are disulfide-bonded: Cys249–Cys538, Cys372–Cys388, Cys428–Cys435, Cys520–Cys539, Cys524–Cys542, Cys545–Cys557, and Cys560–Cys573. The N-linked (GlcNAc...) asparagine glycan is linked to Asn301. Asp312 provides a ligand contact to L-glutamate. Lys405 provides a ligand contact to L-glutamate. A helical membrane pass occupies residues Trp587–Val607. Residues Thr608–Glu624 lie on the Cytoplasmic side of the membrane. A helical transmembrane segment spans residues Leu625–Ala645. The Extracellular portion of the chain corresponds to Glu646–Ser653. Residues Leu654–Leu671 traverse the membrane as a helical segment. Topologically, residues Thr672–Gln699 are cytoplasmic. A helical transmembrane segment spans residues Leu700–Val720. Topologically, residues Asp721–Leu751 are extracellular. A helical membrane pass occupies residues Ser752 to Ile772. At Lys773–Pro786 the chain is on the cytoplasmic side. Residues Ile787–Gly807 traverse the membrane as a helical segment. At Thr808–Val826 the chain is on the extracellular side. A helical membrane pass occupies residues Ser827–Phe847. Residues His848 to Ile912 lie on the Cytoplasmic side of the membrane.

This sequence belongs to the G-protein coupled receptor 3 family. Interacts with PICK1.

The protein resides in the cell membrane. In terms of biological role, G-protein coupled receptor for glutamate. Ligand binding causes a conformation change that triggers signaling via guanine nucleotide-binding proteins (G proteins) and modulates the activity of down-stream effectors. Signaling inhibits adenylate cyclase activity. This is Metabotropic glutamate receptor 4 (Grm4) from Mus musculus (Mouse).